The sequence spans 220 residues: Guanylate kinase (220 aa).

The 181-residue stretch at 14-194 (GLMVVISSPS…SYAAIKSIIN (181 aa)) folds into the Guanylate kinase-like domain. Residue 21–28 (SPSGAGKS) coordinates ATP.

This sequence belongs to the guanylate kinase family.

Its subcellular location is the cytoplasm. The enzyme catalyses GMP + ATP = GDP + ADP. In terms of biological role, essential for recycling GMP and indirectly, cGMP. This Brucella abortus (strain 2308) protein is Guanylate kinase.